Consider the following 226-residue polypeptide: Glutathione peroxidase 3 (226 aa).

A signal peptide spans 1-24 (MARLLQASCLLSLLLAGFVPQSRG). Selenocysteine 73 is a catalytic residue. Residue selenocysteine 73 is a non-standard amino acid, selenocysteine.

Belongs to the glutathione peroxidase family. In terms of assembly, homotetramer. In terms of tissue distribution, secreted in plasma.

It localises to the secreted. It carries out the reaction 2 glutathione + H2O2 = glutathione disulfide + 2 H2O. It catalyses the reaction tert-butyl hydroperoxide + 2 glutathione = tert-butanol + glutathione disulfide + H2O. In terms of biological role, protects cells and enzymes from oxidative damage, by catalyzing the reduction of hydrogen peroxide, lipid peroxides and organic hydroperoxide, by glutathione. This is Glutathione peroxidase 3 from Pongo pygmaeus (Bornean orangutan).